The sequence spans 617 residues: Ceramide transfer protein (617 aa).

A compositionally biased stretch (polar residues) spans 1 to 11 (MSDNQSWNSSG). The tract at residues 1–23 (MSDNQSWNSSGSEEDLEPESGPP) is disordered. The PH domain maps to 23 to 117 (PVERCGVLSK…WIDSIEQHKS (95 aa)). Residues 268 to 302 (REDSWQKRLDKEIEKRRRVEEAYKNAMTELKKKSH) adopt a coiled-coil conformation. The short motif at 320-326 (EFFDAVE) is the FFAT element. Residues 341-382 (EKGRSHWPPSPPSSEAHTAAGSHRLVQAPPSCPPPTDLVSSS) are disordered. Positions 383–611 (DEHRFRIQVE…FTSYVQEKTA (229 aa)) constitute an START domain. Glu466, Gln487, Asn524, and Tyr572 together coordinate an N-acylsphing-4-enine.

It localises to the cytoplasm. Its subcellular location is the golgi apparatus. The protein resides in the endoplasmic reticulum. The catalysed reaction is N-hexadecanoylsphing-4-enine(in) = N-hexadecanoylsphing-4-enine(out). May mediate the intracellular trafficking of ceramide in a non-vesicular manner. The chain is Ceramide transfer protein (cert1) from Xenopus laevis (African clawed frog).